The sequence spans 251 residues: Triosephosphate isomerase (251 aa).

9–11 (NWK) lines the substrate pocket. Catalysis depends on His-94, which acts as the Electrophile. Glu-166 functions as the Proton acceptor in the catalytic mechanism. Residues Gly-172, Ser-211, and 232-233 (GG) each bind substrate.

Belongs to the triosephosphate isomerase family. Homodimer.

It is found in the cytoplasm. It catalyses the reaction D-glyceraldehyde 3-phosphate = dihydroxyacetone phosphate. It participates in carbohydrate biosynthesis; gluconeogenesis. Its pathway is carbohydrate degradation; glycolysis; D-glyceraldehyde 3-phosphate from glycerone phosphate: step 1/1. Functionally, involved in the gluconeogenesis. Catalyzes stereospecifically the conversion of dihydroxyacetone phosphate (DHAP) to D-glyceraldehyde-3-phosphate (G3P). The sequence is that of Triosephosphate isomerase from Xanthomonas oryzae pv. oryzae (strain MAFF 311018).